The following is a 189-amino-acid chain: Protein Flattop (189 aa).

The segment at 112-189 is disordered; it reads EISGKPFDPD…PPPSPCKSTK (78 aa). Residues 137 to 148 show a composition bias toward polar residues; sequence APNPTIIPSSPV. The span at 178–189 shows a compositional bias: pro residues; it reads NNPPPSPCKSTK.

Belongs to the Flattop family. Microtubule inner protein component of sperm flagellar doublet microtubules. Interacts with DLG3. Expressed in mono- and multiciliated tissues during planar cell polarity acquisition.

Its subcellular location is the cytoplasm. The protein resides in the cytoskeleton. It is found in the cilium basal body. It localises to the cilium axoneme. The protein localises to the flagellum axoneme. Its subcellular location is the apical cell membrane. Its function is as follows. Microtubule inner protein (MIP) part of the dynein-decorated doublet microtubules (DMTs) in cilia axoneme. Acts as a regulator of cilium basal body docking and positioning in mono- and multiciliated cells. Regulates basal body docking and cilia formation in multiciliated lung cells. Regulates kinocilium positioning and stereocilia bundle morphogenesis in the inner ear. This Mus musculus (Mouse) protein is Protein Flattop.